Consider the following 395-residue polypeptide: Elongation factor Tu (395 aa).

In terms of domain architecture, tr-type G spans 10–205 (KPHVNIGTIG…CDTWIPLPPR (196 aa)). The tract at residues 19 to 26 (GHVDHGKT) is G1. Residue 19-26 (GHVDHGKT) participates in GTP binding. Residue Thr-26 coordinates Mg(2+). Residues 60-64 (GITIN) are G2. The G3 stretch occupies residues 81 to 84 (DCPG). GTP is bound by residues 81 to 85 (DCPGH) and 136 to 139 (NKCD). Positions 136 to 139 (NKCD) are G4. The tract at residues 174–176 (SAL) is G5.

The protein belongs to the TRAFAC class translation factor GTPase superfamily. Classic translation factor GTPase family. EF-Tu/EF-1A subfamily. As to quaternary structure, monomer.

Its subcellular location is the cytoplasm. It catalyses the reaction GTP + H2O = GDP + phosphate + H(+). In terms of biological role, GTP hydrolase that promotes the GTP-dependent binding of aminoacyl-tRNA to the A-site of ribosomes during protein biosynthesis. The chain is Elongation factor Tu from Parabacteroides distasonis (strain ATCC 8503 / DSM 20701 / CIP 104284 / JCM 5825 / NCTC 11152).